The sequence spans 144 residues: MLMPKRVKYRKQQRGRIKGNATRGNTLTYGEYGLQALEPGWITATQIEAARVAMTRYIKRGGKVWIKIFPDKPVTKKPAETRMGSGKGSPEFWVAVVKPGRVLFEIGGVSEDVAKEALRLAMHKLPIKTKFLKREELGGESNES.

The protein belongs to the universal ribosomal protein uL16 family. As to quaternary structure, part of the 50S ribosomal subunit.

In terms of biological role, binds 23S rRNA and is also seen to make contacts with the A and possibly P site tRNAs. The sequence is that of Large ribosomal subunit protein uL16 from Caldanaerobacter subterraneus subsp. tengcongensis (strain DSM 15242 / JCM 11007 / NBRC 100824 / MB4) (Thermoanaerobacter tengcongensis).